Here is a 355-residue protein sequence, read N- to C-terminus: Transcription factor TGAL9 (355 aa).

Disordered regions lie at residues F83 to I104 and G118 to T188. Positions G118–S134 are enriched in low complexity. A compositionally biased stretch (polar residues) spans R135–S144. 2 stretches are compositionally biased toward basic and acidic residues: residues K148–G159 and S176–T188. Residues D185–R230 enclose the bZIP domain. Residues K187–K207 form a basic motif region. The segment at L213–L227 is leucine-zipper. The region spanning A254–T355 is the DOG1 domain.

It belongs to the bZIP family. As to quaternary structure, interacts with NPR5/NH4, NH5.1 and NH5.2.

The protein resides in the nucleus. In terms of biological role, transcriptional regulator involved in defense response. The protein is Transcription factor TGAL9 of Oryza sativa subsp. japonica (Rice).